A 131-amino-acid polypeptide reads, in one-letter code: MAGTKPGDLGGVKVGQYVVIEGVACKVMDTAHSKPGKHGGAKVRLVAVGIFEPVKKEHVGPASSRIDIPLIDKRKGQVLALMGDNVQIMDMETYETLEIPMPDDVEGIESGVEVEYFEAMDRYKITRVISK.

A Hypusine modification is found at Lys37.

This sequence belongs to the eIF-5A family.

The protein localises to the cytoplasm. Functionally, functions by promoting the formation of the first peptide bond. In Methanococcus maripaludis (strain C7 / ATCC BAA-1331), this protein is Translation initiation factor 5A (eIF5A).